The chain runs to 476 residues: ATP synthase subunit beta (476 aa).

ATP is bound at residue 154–161 (GGAGVGKT).

The protein belongs to the ATPase alpha/beta chains family. As to quaternary structure, F-type ATPases have 2 components, CF(1) - the catalytic core - and CF(0) - the membrane proton channel. CF(1) has five subunits: alpha(3), beta(3), gamma(1), delta(1), epsilon(1). CF(0) has four main subunits: a(1), b(1), b'(1) and c(9-12).

Its subcellular location is the cell inner membrane. The enzyme catalyses ATP + H2O + 4 H(+)(in) = ADP + phosphate + 5 H(+)(out). In terms of biological role, produces ATP from ADP in the presence of a proton gradient across the membrane. The catalytic sites are hosted primarily by the beta subunits. The protein is ATP synthase subunit beta of Rhodopseudomonas palustris (strain HaA2).